The primary structure comprises 715 residues: Glycine--tRNA ligase beta subunit (715 aa).

This sequence belongs to the class-II aminoacyl-tRNA synthetase family. In terms of assembly, tetramer of two alpha and two beta subunits.

Its subcellular location is the cytoplasm. The catalysed reaction is tRNA(Gly) + glycine + ATP = glycyl-tRNA(Gly) + AMP + diphosphate. This is Glycine--tRNA ligase beta subunit from Nitrosomonas europaea (strain ATCC 19718 / CIP 103999 / KCTC 2705 / NBRC 14298).